A 316-amino-acid chain; its full sequence is Adenine deaminase (316 aa).

Positions 14, 16, and 194 each coordinate Zn(2+). Glu197 functions as the Proton donor in the catalytic mechanism. Position 275 (Asp275) interacts with Zn(2+). A substrate-binding site is contributed by Asp276.

This sequence belongs to the metallo-dependent hydrolases superfamily. Adenosine and AMP deaminases family. Adenine deaminase type 2 subfamily. Zn(2+) serves as cofactor.

It catalyses the reaction adenine + H2O + H(+) = hypoxanthine + NH4(+). Its function is as follows. Catalyzes the hydrolytic deamination of adenine to hypoxanthine. Plays an important role in the purine salvage pathway and in nitrogen catabolism. The protein is Adenine deaminase of Pseudomonas aeruginosa (strain LESB58).